The following is a 39-amino-acid chain: Cytochrome b6-f complex subunit 5 (39 aa).

A helical membrane pass occupies residues 5–25 (LLCGIVLGLVPITLLGLFVSA).

This sequence belongs to the PetG family. The 4 large subunits of the cytochrome b6-f complex are cytochrome b6, subunit IV (17 kDa polypeptide, PetD), cytochrome f and the Rieske protein, while the 4 small subunits are PetG, PetL, PetM and PetN. The complex functions as a dimer.

The protein resides in the cellular thylakoid membrane. In terms of biological role, component of the cytochrome b6-f complex, which mediates electron transfer between photosystem II (PSII) and photosystem I (PSI), cyclic electron flow around PSI, and state transitions. PetG is required for either the stability or assembly of the cytochrome b6-f complex. This is Cytochrome b6-f complex subunit 5 from Prochlorococcus marinus (strain MIT 9515).